We begin with the raw amino-acid sequence, 468 residues long: A-type ATP synthase subunit B (468 aa).

It belongs to the ATPase alpha/beta chains family. In terms of assembly, has multiple subunits with at least A(3), B(3), C, D, E, F, H, I and proteolipid K(x).

It is found in the cell membrane. Functionally, component of the A-type ATP synthase that produces ATP from ADP in the presence of a proton gradient across the membrane. The B chain is a regulatory subunit. In Haloferax volcanii (strain ATCC 29605 / DSM 3757 / JCM 8879 / NBRC 14742 / NCIMB 2012 / VKM B-1768 / DS2) (Halobacterium volcanii), this protein is A-type ATP synthase subunit B.